A 343-amino-acid chain; its full sequence is Putative outer membrane protein y4fJ (343 aa).

The first 17 residues, 1–17 (MRMNFSTVLLGSSVALA), serve as a signal peptide directing secretion.

Belongs to the alphaproteobacteria porin family.

It is found in the cell outer membrane. Its function is as follows. May act as an outer membrane pore. This is Putative outer membrane protein y4fJ from Sinorhizobium fredii (strain NBRC 101917 / NGR234).